The chain runs to 450 residues: 23S rRNA (uracil(1939)-C(5))-methyltransferase RlmD (450 aa).

A TRAM domain is found at 15–73; sequence KAVPAKNLTVTVASLDPFGQGVARHEGKTVFVTGVLPGEQAEVQLTEEKRQFSHAKLKR. Cysteine 86, cysteine 92, cysteine 95, and cysteine 173 together coordinate [4Fe-4S] cluster. Glutamine 276, phenylalanine 305, asparagine 310, glutamate 326, asparagine 353, and aspartate 374 together coordinate S-adenosyl-L-methionine. Catalysis depends on cysteine 400, which acts as the Nucleophile.

This sequence belongs to the class I-like SAM-binding methyltransferase superfamily. RNA M5U methyltransferase family. RlmD subfamily.

It carries out the reaction uridine(1939) in 23S rRNA + S-adenosyl-L-methionine = 5-methyluridine(1939) in 23S rRNA + S-adenosyl-L-homocysteine + H(+). Functionally, catalyzes the formation of 5-methyl-uridine at position 1939 (m5U1939) in 23S rRNA. The polypeptide is 23S rRNA (uracil(1939)-C(5))-methyltransferase RlmD (Pectobacterium atrosepticum (strain SCRI 1043 / ATCC BAA-672) (Erwinia carotovora subsp. atroseptica)).